We begin with the raw amino-acid sequence, 177 residues long: Probable nicotinate-nucleotide adenylyltransferase (177 aa).

Belongs to the NadD family.

It carries out the reaction nicotinate beta-D-ribonucleotide + ATP + H(+) = deamido-NAD(+) + diphosphate. It participates in cofactor biosynthesis; NAD(+) biosynthesis; deamido-NAD(+) from nicotinate D-ribonucleotide: step 1/1. Its function is as follows. Catalyzes the reversible adenylation of nicotinate mononucleotide (NaMN) to nicotinic acid adenine dinucleotide (NaAD). In Nitratiruptor sp. (strain SB155-2), this protein is Probable nicotinate-nucleotide adenylyltransferase.